The chain runs to 363 residues: Phospho-N-acetylmuramoyl-pentapeptide-transferase (363 aa).

10 consecutive transmembrane segments (helical) span residues 3 to 23 (QILF…PLLI), 48 to 68 (GTPT…YFLA), 83 to 103 (PTFS…VGFL), 121 to 141 (AKMI…LQFA), 159 to 179 (FGWT…ILAM), 192 to 212 (LATG…VWQF), 234 to 254 (PLDL…FLWW), 261 to 281 (IFMG…LAIC), 286 to 306 (LLMA…VIQV), and 340 to 360 (FWII…AGWA).

This sequence belongs to the glycosyltransferase 4 family. MraY subfamily. It depends on Mg(2+) as a cofactor.

The protein resides in the cell membrane. The catalysed reaction is UDP-N-acetyl-alpha-D-muramoyl-L-alanyl-gamma-D-glutamyl-meso-2,6-diaminopimeloyl-D-alanyl-D-alanine + di-trans,octa-cis-undecaprenyl phosphate = di-trans,octa-cis-undecaprenyl diphospho-N-acetyl-alpha-D-muramoyl-L-alanyl-D-glutamyl-meso-2,6-diaminopimeloyl-D-alanyl-D-alanine + UMP. Its pathway is cell wall biogenesis; peptidoglycan biosynthesis. Its function is as follows. Catalyzes the initial step of the lipid cycle reactions in the biosynthesis of the cell wall peptidoglycan: transfers peptidoglycan precursor phospho-MurNAc-pentapeptide from UDP-MurNAc-pentapeptide onto the lipid carrier undecaprenyl phosphate, yielding undecaprenyl-pyrophosphoryl-MurNAc-pentapeptide, known as lipid I. This is Phospho-N-acetylmuramoyl-pentapeptide-transferase from Streptomyces coelicolor (strain ATCC BAA-471 / A3(2) / M145).